The following is a 196-amino-acid chain: tRNA(Phe) 7-((3-amino-3-carboxypropyl)-4-demethylwyosine(37)-N(4))-methyltransferase (196 aa).

This sequence belongs to the TYW3 family.

It catalyses the reaction 4-demethyl-7-[(3S)-3-amino-3-carboxypropyl]wyosine(37) in tRNA(Phe) + S-adenosyl-L-methionine = 7-[(3S)-3-amino-3-carboxypropyl]wyosine(37) in tRNA(Phe) + S-adenosyl-L-homocysteine + H(+). S-adenosyl-L-methionine-dependent methyltransferase that acts as a component of the wyosine derivatives biosynthesis pathway. Probably methylates N-4 position of wybutosine-86 to produce wybutosine-72. The protein is tRNA(Phe) 7-((3-amino-3-carboxypropyl)-4-demethylwyosine(37)-N(4))-methyltransferase of Archaeoglobus fulgidus (strain ATCC 49558 / DSM 4304 / JCM 9628 / NBRC 100126 / VC-16).